The primary structure comprises 433 residues: Chaperone SurA (433 aa).

A signal peptide spans 1–24 (MDGIKLLLSIIILYFYTYINCAIA). PpiC domains are found at residues 173 to 274 (NTTF…KVHD) and 285 to 385 (ITEV…QLQN).

It is found in the periplasm. The catalysed reaction is [protein]-peptidylproline (omega=180) = [protein]-peptidylproline (omega=0). Chaperone involved in the correct folding and assembly of outer membrane proteins. Recognizes specific patterns of aromatic residues and the orientation of their side chains, which are found more frequently in integral outer membrane proteins. May act in both early periplasmic and late outer membrane-associated steps of protein maturation. The sequence is that of Chaperone SurA from Baumannia cicadellinicola subsp. Homalodisca coagulata.